The sequence spans 256 residues: F-actin-capping protein subunit alpha (256 aa).

A Phosphoserine modification is found at Ser31.

Belongs to the F-actin-capping protein alpha subunit family. In terms of assembly, component of the F-actin capping complex, composed of a heterodimer of an alpha and a beta subunit.

It localises to the cytoplasm. The protein resides in the cytoskeleton. The protein localises to the actin patch. F-actin-capping proteins bind in a Ca(2+)-independent manner to the fast growing ends of actin filaments (barbed end) thereby blocking the exchange of subunits at these ends. Unlike other capping proteins (such as gelsolin and severin), these proteins do not sever actin filaments. Competes with formin cdc12 for attachment to the actin filaments barbed ends. Slowly replaces cdc12 on the barbed ends in preparation for filament disassembly during contractile ring constriction. The protein is F-actin-capping protein subunit alpha (acp1) of Schizosaccharomyces pombe (strain 972 / ATCC 24843) (Fission yeast).